We begin with the raw amino-acid sequence, 504 residues long: MAIQAEEISALIKQQLEKFDTTLTVEEVGTVTYIGDGVARATGLANAMAGELLEFANGTFGMAQNLESSEVGIIILGGFDDIREGDTVKRTGRIMEVPVGEQLIGRVVNALGQPIDGLGEIKTDKFRPVEVKAPGVMQRKSVFEPLQTGIKAIDALVPIGRGQRELIIGDRKTGKTSLAIDTILNQKDQNMIVIYVAIGQKDSTVRTQVETLRQMGAMDYTIVVNAGPSEPAPMLYLAPYVGAAMGEEFMYNGKHVLIVYDDLSKQATAYRELSLILRRPPGREAYPGDVFYLHSRLLERAAKLSDELGGGSMTALPIIETQAGDVSAYIPTNVISITDGQVFLDADQFYAGVRPAIDAGTSVSRVGGDAQIKAMKKVAGTLRLDLASFRELESFAQFGSDLDAATQAKLARGRRTVEVLKQPLHKPMPVQHQVIVLYALTHGYIDDIAVEDIQRFQDELIAYVDANANDLFKVIIDTKQLPEESAMNAAIEAFKAGFAGSAAE.

169–176 (GDRKTGKT) serves as a coordination point for ATP.

Belongs to the ATPase alpha/beta chains family. In terms of assembly, F-type ATPases have 2 components, CF(1) - the catalytic core - and CF(0) - the membrane proton channel. CF(1) has five subunits: alpha(3), beta(3), gamma(1), delta(1), epsilon(1). CF(0) has three main subunits: a(1), b(2) and c(9-12). The alpha and beta chains form an alternating ring which encloses part of the gamma chain. CF(1) is attached to CF(0) by a central stalk formed by the gamma and epsilon chains, while a peripheral stalk is formed by the delta and b chains.

It localises to the cell membrane. The enzyme catalyses ATP + H2O + 4 H(+)(in) = ADP + phosphate + 5 H(+)(out). Its function is as follows. Produces ATP from ADP in the presence of a proton gradient across the membrane. The alpha chain is a regulatory subunit. The protein is ATP synthase subunit alpha of Leuconostoc citreum (strain KM20).